Reading from the N-terminus, the 337-residue chain is MTQVFQGRSFLAEKDFTREEFEYLIDFAAHLKDLKKRGIPHHYLEGKNIALLFEKTSTRTRAAFTTAAIDLGAHPEYLGANDIQLGKKESTEDTAKVLGRMFDGIEFRGFSQRMVEELAEFSGVPVWNGLTDEWHPTQMLADYLTVKENFGKLEGLTLVYCGDGRNNVANSLLVAGTLLGVNVHIFSPKELFPAEDIVKLAEGYAKASGAHVLVTDNADEAVKGADVLYTDVWVSMGEEDKFEERVKLLKPYQVNMELVKKAANDNLIFLHCLPAFHDTNTVYGKDVAEKFGVEEMEVTDEVFRSKYARHFDQAENRMHTIKAVMAATLGNLFIPKV.

Residues 57-60, Gln84, Arg108, and 135-138 contribute to the carbamoyl phosphate site; these read STRT and HPTQ. Residues Asn167, Asp231, and 235 to 236 contribute to the L-ornithine site; that span reads SM. Residues 272 to 273 and Arg317 contribute to the carbamoyl phosphate site; that span reads CL.

The protein belongs to the aspartate/ornithine carbamoyltransferase superfamily. OTCase family.

Its subcellular location is the cytoplasm. It catalyses the reaction carbamoyl phosphate + L-ornithine = L-citrulline + phosphate + H(+). It functions in the pathway amino-acid degradation; L-arginine degradation via ADI pathway; carbamoyl phosphate from L-arginine: step 2/2. Reversibly catalyzes the transfer of the carbamoyl group from carbamoyl phosphate (CP) to the N(epsilon) atom of ornithine (ORN) to produce L-citrulline. The protein is Ornithine carbamoyltransferase of Streptococcus equi subsp. equi (strain 4047).